Here is a 391-residue protein sequence, read N- to C-terminus: 4-hydroxy-3-methylbut-2-en-1-yl diphosphate synthase (flavodoxin) (391 aa).

[4Fe-4S] cluster-binding residues include cysteine 286, cysteine 289, cysteine 321, and glutamate 328.

It belongs to the IspG family. [4Fe-4S] cluster serves as cofactor.

The catalysed reaction is (2E)-4-hydroxy-3-methylbut-2-enyl diphosphate + oxidized [flavodoxin] + H2O + 2 H(+) = 2-C-methyl-D-erythritol 2,4-cyclic diphosphate + reduced [flavodoxin]. It participates in isoprenoid biosynthesis; isopentenyl diphosphate biosynthesis via DXP pathway; isopentenyl diphosphate from 1-deoxy-D-xylulose 5-phosphate: step 5/6. In terms of biological role, converts 2C-methyl-D-erythritol 2,4-cyclodiphosphate (ME-2,4cPP) into 1-hydroxy-2-methyl-2-(E)-butenyl 4-diphosphate. The polypeptide is 4-hydroxy-3-methylbut-2-en-1-yl diphosphate synthase (flavodoxin) (Corynebacterium diphtheriae (strain ATCC 700971 / NCTC 13129 / Biotype gravis)).